A 496-amino-acid polypeptide reads, in one-letter code: Probable cytosol aminopeptidase (496 aa).

Residues Lys258 and Asp263 each coordinate Mn(2+). Lys270 is an active-site residue. Asp281, Asp340, and Glu342 together coordinate Mn(2+). Residue Arg344 is part of the active site.

Belongs to the peptidase M17 family. Mn(2+) serves as cofactor.

Its subcellular location is the cytoplasm. It carries out the reaction Release of an N-terminal amino acid, Xaa-|-Yaa-, in which Xaa is preferably Leu, but may be other amino acids including Pro although not Arg or Lys, and Yaa may be Pro. Amino acid amides and methyl esters are also readily hydrolyzed, but rates on arylamides are exceedingly low.. The enzyme catalyses Release of an N-terminal amino acid, preferentially leucine, but not glutamic or aspartic acids.. In terms of biological role, presumably involved in the processing and regular turnover of intracellular proteins. Catalyzes the removal of unsubstituted N-terminal amino acids from various peptides. The protein is Probable cytosol aminopeptidase of Helicobacter pylori (strain HPAG1).